The following is a 615-amino-acid chain: DNA mismatch repair protein MutL (615 aa).

The disordered stretch occupies residues 363–397; the sequence is FAEPAAREPVAPRYTPAPASGSRPAAPWPNAQPGY. Residues 364–391 show a composition bias toward low complexity; sequence AEPAAREPVAPRYTPAPASGSRPAAPWP.

It belongs to the DNA mismatch repair MutL/HexB family.

This protein is involved in the repair of mismatches in DNA. It is required for dam-dependent methyl-directed DNA mismatch repair. May act as a 'molecular matchmaker', a protein that promotes the formation of a stable complex between two or more DNA-binding proteins in an ATP-dependent manner without itself being part of a final effector complex. This Escherichia coli O8 (strain IAI1) protein is DNA mismatch repair protein MutL.